The primary structure comprises 429 residues: Glutamyl-tRNA reductase (429 aa).

Residues Thr52–Arg55, Ser110, Glu115–Gln117, and Gln121 each bind substrate. Cys53 (nucleophile) is an active-site residue. Position 190 to 195 (Gly190 to Ile195) interacts with NADP(+).

This sequence belongs to the glutamyl-tRNA reductase family. In terms of assembly, homodimer.

It catalyses the reaction (S)-4-amino-5-oxopentanoate + tRNA(Glu) + NADP(+) = L-glutamyl-tRNA(Glu) + NADPH + H(+). Its pathway is porphyrin-containing compound metabolism; protoporphyrin-IX biosynthesis; 5-aminolevulinate from L-glutamyl-tRNA(Glu): step 1/2. In terms of biological role, catalyzes the NADPH-dependent reduction of glutamyl-tRNA(Glu) to glutamate 1-semialdehyde (GSA). The sequence is that of Glutamyl-tRNA reductase from Verminephrobacter eiseniae (strain EF01-2).